The primary structure comprises 860 residues: Anoctamin-7 (860 aa).

At 1-297 the chain is on the cytoplasmic side; the sequence is MLRKQAGEED…YFAWLGFYTG (297 aa). A disordered region spans residues 24 to 50; the sequence is NGCSYGSTAQASEAGKQQVAPSRVGSS. The helical transmembrane segment at 298-318 threads the bilayer; the sequence is WLLPAAVVGTVVFLAGCFLVF. At 319-362 the chain is on the extracellular side; it reads SDVPTQELCHSSDTFDMCPLCSDCSFWLLSSACTLAQAGRLFDH. The chain crosses the membrane as a helical span at residues 363-383; that stretch reads GGTVFFSLFMALWAVLLLEYW. Residues 384 to 441 are Cytoplasmic-facing; it reads KRKNATLAYRWDCSDYEDIEERPRPQFAATAPMTALNPITGEDEPYFPEKNRVRRMLA. A helical membrane pass occupies residues 442-462; it reads GSVVLLMMVAVVIMCLVSIIL. Topologically, residues 463-492 are extracellular; the sequence is YRAVMAIIVSKSNNAFLSAWASRIASLTGS. The chain crosses the membrane as a helical span at residues 493 to 513; sequence VVNLVFILILSKVYVILAQVL. Residues 514-530 lie on the Cytoplasmic side of the membrane; sequence TRWEMHRTQTAFEDAFT. Residues 531 to 551 form a helical membrane-spanning segment; the sequence is LKVFIFQFVNFYASPVYIAFF. Residues 552 to 652 are Extracellular-facing; the sequence is KGRFVGYPGN…FHEYLEMVLQ (101 aa). The helical transmembrane segment at 653–673 threads the bilayer; it reads FGFVTIFVAACPLAPLFALLN. At 674-701 the chain is on the cytoplasmic side; sequence NWVEIRLDARKFVCEYRRPVAERAQDIG. Residues 702-722 traverse the membrane as a helical segment; that stretch reads IWFHILAGLTHLAVISNAFLL. Residues 723–779 are Extracellular-facing; it reads AFSSDFLPRVYYSWTRAPDLRGFLNFTLARAPPTFTSAHNRTCRYRAFRDDDGHYSP. 2 N-linked (GlcNAc...) asparagine glycosylation sites follow: Asn-747 and Asn-762. Residues 780 to 800 traverse the membrane as a helical segment; sequence TYWTLLAIRLAFVIVFEHVVF. Topologically, residues 801–860 are cytoplasmic; that stretch reads STGRFLDLLVPDIPESVEIKVKREYYLAKQALADNEALLGATGVKGEQPPSSEPSLGLPA.

This sequence belongs to the anoctamin family.

The protein resides in the cell membrane. It localises to the endoplasmic reticulum. It carries out the reaction a 1,2-diacyl-sn-glycero-3-phospho-L-serine(in) = a 1,2-diacyl-sn-glycero-3-phospho-L-serine(out). The catalysed reaction is a beta-D-galactosyl-(1&lt;-&gt;1')-N-acylsphing-4-enine(out) = a beta-D-galactosyl-(1&lt;-&gt;1')-N-acylsphing-4-enine(in). It catalyses the reaction a 1,2-diacyl-sn-glycero-3-phosphocholine(in) = a 1,2-diacyl-sn-glycero-3-phosphocholine(out). Functionally, has calcium-dependent phospholipid scramblase activity; scrambles phosphatidylserine, phosphatidylcholine and galactosylceramide. Does not exhibit calcium-activated chloride channel (CaCC) activity. May play a role in cell-cell interactions. The chain is Anoctamin-7 (Ano7) from Rattus norvegicus (Rat).